A 209-amino-acid polypeptide reads, in one-letter code: Small ribosomal subunit protein eS1 (209 aa).

The protein belongs to the eukaryotic ribosomal protein eS1 family.

The protein is Small ribosomal subunit protein eS1 of Picrophilus torridus (strain ATCC 700027 / DSM 9790 / JCM 10055 / NBRC 100828 / KAW 2/3).